The sequence spans 76 residues: Small ribosomal subunit protein bS21A (76 aa).

Over residues histidine 35–arginine 52 the composition is skewed to basic and acidic residues. Positions histidine 35–arginine 76 are disordered. A compositionally biased stretch (basic residues) spans arginine 53–alanine 62.

Belongs to the bacterial ribosomal protein bS21 family.

The sequence is that of Small ribosomal subunit protein bS21A from Chelativorans sp. (strain BNC1).